A 498-amino-acid polypeptide reads, in one-letter code: Hexokinase-1 (498 aa).

Residues 39–492 (AAAQRVVAEL…SGLGAALVAA (454 aa)) enclose the Hexokinase domain. The hexokinase small subdomain stretch occupies residues 95–233 (TGGEEGSYYA…GLDMRVSALI (139 aa)). ADP contacts are provided by glycine 109, threonine 110, and asparagine 111. Positions 199, 200, 234, and 235 each coordinate D-glucose. Residues 234–481 (NDTVGTLAAG…ERVVVKLASD (248 aa)) form a hexokinase large subdomain region. Residue threonine 258 coordinates ADP. D-glucose contacts are provided by asparagine 261, glutamate 290, and glutamate 321. Glycine 446 contributes to the ADP binding site.

This sequence belongs to the hexokinase family. Highly expressed in senescent leaves.

It carries out the reaction a D-hexose + ATP = a D-hexose 6-phosphate + ADP + H(+). The catalysed reaction is D-fructose + ATP = D-fructose 6-phosphate + ADP + H(+). The enzyme catalyses D-glucose + ATP = D-glucose 6-phosphate + ADP + H(+). Its pathway is carbohydrate metabolism; hexose metabolism. It participates in carbohydrate degradation; glycolysis; D-glyceraldehyde 3-phosphate and glycerone phosphate from D-glucose: step 1/4. Its function is as follows. Fructose and glucose phosphorylating enzyme. Acts as a positive regulator of leaf senescence by mediating glucose accumulation and inducing an increase in reactive oxygen species (ROS). This chain is Hexokinase-1 (HXK1), found in Oryza sativa subsp. japonica (Rice).